The chain runs to 397 residues: Decapping and exoribonuclease protein (397 aa).

The segment covering 1–10 (MEPRGTKRKA) has biased composition (basic residues). Positions 1–30 (MEPRGTKRKAEKTEVEKPLNKLPRAVPSLR) are disordered. Substrate-binding positions include Arg58, Glu101, and 131–133 (WRG). An adenosine 3',5'-bisphosphate-binding site is contributed by Met185. Glu192 provides a ligand contact to Mg(2+). Cys217 and Glu234 together coordinate substrate. Residues Glu234, Asp236, Glu253, and Leu254 each contribute to the Mg(2+) site. Residue Asp236 coordinates adenosine 3',5'-bisphosphate. The adenosine 3',5'-bisphosphate; inhibitor stretch occupies residues 253–256 (ELKT). Lys255 and Gln280 together coordinate substrate. Residue Gln280 participates in adenosine 3',5'-bisphosphate binding. Residue Thr392 is modified to Phosphothreonine. A Phosphoserine modification is found at Ser394.

This sequence belongs to the DXO/Dom3Z family. Mg(2+) is required as a cofactor.

It is found in the nucleus. The enzyme catalyses a 5'-end triphospho-ribonucleoside in mRNA + H2O = a 5'-end phospho-ribonucleoside in mRNA + diphosphate + H(+). The catalysed reaction is a 5'-end NAD(+)-phospho-ribonucleoside in mRNA + H2O = a 5'-end phospho-ribonucleoside in mRNA + NAD(+) + H(+). It carries out the reaction a 5'-end NAD(+)-phospho-ribonucleoside in snoRNA + H2O = a 5'-end phospho-ribonucleoside in snoRNA + NAD(+) + H(+). It catalyses the reaction a 5'-end (N(7)-methyl 5'-triphosphoguanosine)-ribonucleoside-ribonucleotide in mRNA + H2O = a (N(7)-methyl 5'-triphosphoguanosine)-nucleoside + a 5'-end phospho-ribonucleoside in mRNA + H(+). The enzyme catalyses a 5'-end FAD-phospho-ribonucleoside in mRNA + H2O = a 5'-end phospho-ribonucleoside in mRNA + FAD + H(+). The catalysed reaction is a 5'-end CoA-ribonucleoside in mRNA + H2O = 3'-dephospho-CoA + a 5'-end phospho-ribonucleoside in mRNA + H(+). The 5'-3' exoribonuclease activity is inhibited by adenosine 3',5'-bisphosphate. Decapping enzyme for NAD-capped RNAs: specifically hydrolyzes the nicotinamide adenine dinucleotide (NAD) cap from a subset of RNAs by removing the entire NAD moiety from the 5'-end of an NAD-capped RNA. The NAD-cap is present at the 5'-end of some RNAs and snoRNAs. In contrast to the canonical 5'-end N7 methylguanosine (m7G) cap, the NAD cap promotes mRNA decay. Preferentially acts on NAD-capped transcripts in response to environmental stress. Also acts as a non-canonical decapping enzyme that removes the entire cap structure of m7G capped or incompletely capped RNAs and mediates their subsequent degradation. Specifically degrades pre-mRNAs with a defective 5'-end m7G cap and is part of a pre-mRNA capping quality control. Has decapping activity toward incomplete 5'-end m7G cap mRNAs such as unmethylated 5'-end-capped RNA (cap0), while it has no activity toward 2'-O-ribose methylated m7G cap (cap1). In contrast to canonical decapping enzymes DCP2 and NUDT16, which cleave the cap within the triphosphate linkage, the decapping activity releases the entire cap structure GpppN and a 5'-end monophosphate RNA. Also has 5'-3' exoribonuclease activities: The 5'-end monophosphate RNA is then degraded by the 5'-3' exoribonuclease activity, enabling this enzyme to decap and degrade incompletely capped mRNAs. Also possesses RNA 5'-pyrophosphohydrolase activity by hydrolyzing the 5'-end triphosphate to release pyrophosphates. Exhibits decapping activity towards FAD-capped RNAs. Exhibits decapping activity towards dpCoA-capped RNAs in vitro. This Mus musculus (Mouse) protein is Decapping and exoribonuclease protein.